Consider the following 417-residue polypeptide: Sterile alpha motif domain-containing protein 14 (417 aa).

Residues 37 to 306 (LLVKGRRHRP…QETKCSYPYH (270 aa)) are disordered. The span at 40 to 49 (KGRRHRPSRS) shows a compositional bias: basic residues. 2 positions are modified to phosphoserine: Ser-84 and Ser-108. Low complexity predominate over residues 138 to 153 (SGSPPRSAPSSDSSPS). Positions 159–173 (PRAEPHSEDDSRDAS) are enriched in basic and acidic residues. Phosphoserine is present on residues Ser-173 and Ser-179. 2 stretches are compositionally biased toward low complexity: residues 244 to 260 (SGKG…PTCS) and 276 to 289 (STLS…SSSP). Ser-279 carries the phosphoserine modification. Thr-283 bears the Phosphothreonine mark. One can recognise an SAM domain in the interval 326-389 (WTSQQVGQWL…KRKLKELAAA (64 aa)). Residues 375-416 (DRALVKRKLKELAAAAEKERKAQEKTARQREKLRRREHEAKK) adopt a coiled-coil conformation. The tract at residues 390–417 (AEKERKAQEKTARQREKLRRREHEAKKS) is disordered.

In Rattus norvegicus (Rat), this protein is Sterile alpha motif domain-containing protein 14 (Samd14).